The following is a 1059-amino-acid chain: MSLHAARGGPHEDLSWSAIGRRAPRDVVTFGDREGGGGMRSAQQGPGAVRVDEASSASTFRELDEAFLQTQTKIWLGEVLHLRFGEDALVADLLADGELLFQVSKVLWKMLLKNNREQLKQSKVYIYERLSFGRSSGKYMPYSKVDSFLKICQILGLAGIDLFTPSDVVEKRNVRKVCICIRSVSKKSLILHLNVPDFDVVTYTISMPNYVVGGIRRNLEQTQYSSSSSSGYSPCARSKVLQQQIIFGGQNDQHEDTHYDSDEAESKLSLLEPEDSVNEDNFAAVLSQFNDAHNKGSEGYGESGCGKHGEKSLAESVGSLNIGIIDFEFMDSTPLIHDKESCSLLEPEDSVNEDNFAAVLSKFNDAPNKESKGYGESGRGKHGEKSLAESVGSLNIGIVDSEFMDSSPLIHDKESCSPLEPEGSVNEDNFTAVLSQFNDAPNKESEGYGESGCGKHGEKSLVESVGSLNIGIVDSEFMDSSPLIHDKESCSPLEPEDSVNEDNFAAVLSQFNDAPNKESEGYGESGRGKHGEKSLAESVGSLNIGIIDSEFMDSSPLIHDKESCFPLEPEGSVNEDNFTAVLSQFNDAPNKESEGYGESGCGKHGEKSLVESVGSLNIGIVDSEFMDSSPLIHDKESCSPLEPEDSVNEDNFTAVLSQFNDAPNKESEAYGESGCGKHGENSLDESVGSLNIGVIDSEFMDSSPLIHDKESCSPLEPEDSVNEDNFAAVLSQYSDGPNEGNEGYGESGHYKHEEKSLDESVGSLTIGIIDSEFMDSSRPIHDKESCSTGSAADQCSRTIPAKYELSSEESDSTGSHLVFDSGKNYLELNNHSVTDLERIYNGHATSVDQYVRGNGETLADHPKKEEAGLQKDTGTIAQHRDTLACDGESVCSSCEEPRRGLNGEPSDFSSESHSRLTPTHNTGGKLSMVSEHPVHNMESDMTGMASDSTNPELNPEASTRNEMDGSRSTDNPVEPENVAQDSATRGRPEGDAPRSGKGVLRSVAGGITLVGAVFFMFHLSAALLQKKQGGKLCDGHTISFGKICSEQRKGQEHGQRKRP.

7 repeat units span residues serine 269–cysteine 342, serine 343–cysteine 416, serine 417–cysteine 490, serine 491–cysteine 564, phenylalanine 565–cysteine 638, serine 639–cysteine 712, and serine 713–cysteine 786. The segment at serine 269 to cysteine 786 is 7 X approximate repeats. The interval phenylalanine 511–serine 534 is disordered. Residues proline 515 to serine 534 show a composition bias toward basic and acidic residues. 3 disordered regions span residues glutamine 732–serine 756, glutamate 856–threonine 875, and serine 889–glycine 998. The segment covering leucine 858 to leucine 869 has biased composition (basic and acidic residues). 2 stretches are compositionally biased toward polar residues: residues aspartate 907–glycine 924 and alanine 945–serine 958. The segment covering threonine 984–arginine 994 has biased composition (basic and acidic residues). A helical transmembrane segment spans residues valine 1003–leucine 1023.

Homodimer. Interacts (via N-terminus) with FL1 (via C-terminus), HIP, 19 kDa alpha-zein (AC P06677), 22 kDa alpha-zein (AC O48966), 16 kDa gamma-zein (AC P08031) and 50 kDa gamma-zein (AC C0P381). Expressed in kernels.

It localises to the endoplasmic reticulum membrane. Cereal endosperm protein required for the ring-shaped distribution of 22 kDa alpha- and 16 kDa gamma-zeins in protein bodies. The sequence is that of Protein OPAQUE10 from Zea mays (Maize).